Here is a 775-residue protein sequence, read N- to C-terminus: MIAHNLGYPRIGDNRELKKACEQYWSGAITQQKLQDVAKAIRTNNWLTQKDAGLDLIPCNDFSFYDQVLDMSFMLGLIPERFSSLLQKKDLTELDIYFAMARGYQKDGYDITAMEMTKWFDTNYHYIVPEFRKDQKFSPISEKAIREYTEAKVVIGKAAKPVLLGPVSYLLAGKEKEAGFNRIELIENLLPVYTKLLATLQQNGAEWIQLDEPFLVMDLTVQERKTYETTYTALRNLFPSLKFIVATYFECTGTNIDIAAKLPVDALHLDLVRCPSQLSDILTPAFISSNTMLSLGVVDGRNVWKNDFSTSSTFITKAIAALGKERVMIAPSCSLLHVPCDLDNEKNGNVLTPEIKNWMAFAKQKLHEVAALKKLNRAPMQSEELRLLKANTESIENRAKSKLIHKQHVKARVKAVQPSDSQRKSLFKSRQQIQEKALQLPLMPTTTIGSFPQTDEVRANRAKYKKGDITLAQYEDFVKTEMTKAIEWQEKIGIDVLVHGEFERNDMVEYFGEQLKGYVFSENGWVQSYGSRCVKPPIIYGDIERTEPMTVAWTTLAQSLTKKYMKGMLTGPVTILQWSFVRDDQPRRDTCMQIAFAIRDEVVDLEAAGIKIIQIDEPAIREGLPLRRENWETYLNWAVECFRISASGVKDETQIHTHMCYSEFNDIIKNIAAMDADVITIETSRSQMELLDAFVDFNYPNEIGPGVYDIHSPRIPTTDEMADLLNKAMHVLPVRNIWVNPDCGLKTRRWPETEAALINMVAAAQKIRKEITTVV.

Residues 15-18 (RELK) and K118 each bind 5-methyltetrahydropteroyltri-L-glutamate. Residues 448 to 450 (IGS) and E501 contribute to the L-homocysteine site. L-methionine contacts are provided by residues 448–450 (IGS) and E501. Residues 532 to 533 (RC) and W578 contribute to the 5-methyltetrahydropteroyltri-L-glutamate site. D616 is a binding site for L-homocysteine. D616 contributes to the L-methionine binding site. E622 contributes to the 5-methyltetrahydropteroyltri-L-glutamate binding site. Zn(2+) is bound by residues H658, C660, and E682. H711 serves as the catalytic Proton donor. C743 provides a ligand contact to Zn(2+).

It belongs to the vitamin-B12 independent methionine synthase family. Zn(2+) is required as a cofactor.

The enzyme catalyses 5-methyltetrahydropteroyltri-L-glutamate + L-homocysteine = tetrahydropteroyltri-L-glutamate + L-methionine. It participates in amino-acid biosynthesis; L-methionine biosynthesis via de novo pathway; L-methionine from L-homocysteine (MetE route): step 1/1. Catalyzes the transfer of a methyl group from 5-methyltetrahydrofolate to homocysteine resulting in methionine formation. The polypeptide is 5-methyltetrahydropteroyltriglutamate--homocysteine methyltransferase (Cytophaga hutchinsonii (strain ATCC 33406 / DSM 1761 / CIP 103989 / NBRC 15051 / NCIMB 9469 / D465)).